The chain runs to 189 residues: GMP synthase [glutamine-hydrolyzing] subunit A (189 aa).

A Glutamine amidotransferase type-1 domain is found at 5-189 (KIIVINNYGQ…MNFFKVCEDY (185 aa)). Cys-79 acts as the Nucleophile in catalysis. Active-site residues include His-166 and Glu-168.

Heterodimer composed of a glutamine amidotransferase subunit (A) and a GMP-binding subunit (B).

It carries out the reaction XMP + L-glutamine + ATP + H2O = GMP + L-glutamate + AMP + diphosphate + 2 H(+). Its pathway is purine metabolism; GMP biosynthesis; GMP from XMP (L-Gln route): step 1/1. Functionally, catalyzes the synthesis of GMP from XMP. The protein is GMP synthase [glutamine-hydrolyzing] subunit A of Methanococcoides burtonii (strain DSM 6242 / NBRC 107633 / OCM 468 / ACE-M).